Here is a 122-residue protein sequence, read N- to C-terminus: Large ribosomal subunit protein uL14 (122 aa).

It belongs to the universal ribosomal protein uL14 family. In terms of assembly, part of the 50S ribosomal subunit. Forms a cluster with proteins L3 and L19. In the 70S ribosome, L14 and L19 interact and together make contacts with the 16S rRNA in bridges B5 and B8.

Its function is as follows. Binds to 23S rRNA. Forms part of two intersubunit bridges in the 70S ribosome. This Caulobacter vibrioides (strain ATCC 19089 / CIP 103742 / CB 15) (Caulobacter crescentus) protein is Large ribosomal subunit protein uL14.